Here is a 297-residue protein sequence, read N- to C-terminus: Phosphatidylglycerol--prolipoprotein diacylglyceryl transferase (297 aa).

4 helical membrane passes run 20 to 40, 57 to 77, 107 to 127, and 133 to 153; these read FITI…GLFI, EILP…YVIF, WEGG…IIFF, and IHLK…QSIG. Residue Arg-154 coordinates a 1,2-diacyl-sn-glycero-3-phospho-(1'-sn-glycerol). The next 3 membrane-spanning stretches (helical) occupy residues 193 to 213, 225 to 245, and 266 to 286; these read PTFL…ILIF, GFIS…IEGL, and AQFI…FLRL.

The protein belongs to the Lgt family.

The protein localises to the cell inner membrane. It catalyses the reaction L-cysteinyl-[prolipoprotein] + a 1,2-diacyl-sn-glycero-3-phospho-(1'-sn-glycerol) = an S-1,2-diacyl-sn-glyceryl-L-cysteinyl-[prolipoprotein] + sn-glycerol 1-phosphate + H(+). Its pathway is protein modification; lipoprotein biosynthesis (diacylglyceryl transfer). Functionally, catalyzes the transfer of the diacylglyceryl group from phosphatidylglycerol to the sulfhydryl group of the N-terminal cysteine of a prolipoprotein, the first step in the formation of mature lipoproteins. In Prochlorococcus marinus (strain MIT 9301), this protein is Phosphatidylglycerol--prolipoprotein diacylglyceryl transferase.